Here is a 204-residue protein sequence, read N- to C-terminus: uncharacterized protein (204 aa).

2 disordered regions span residues 1-37 (MRAL…GSVS) and 159-204 (GYRP…DGEL). The segment covering 28–37 (GRGPRAGSVS) has biased composition (low complexity). The WGR domain occupies 88–175 (PYRLYVERLD…LPKEKWPAEA (88 aa)). Basic and acidic residues-rich tracts occupy residues 166–179 (LPKE…EHES) and 188–204 (PEGH…DGEL).

This is an uncharacterized protein from Sinorhizobium fredii (strain NBRC 101917 / NGR234).